We begin with the raw amino-acid sequence, 477 residues long: Ribosomal RNA small subunit methyltransferase F (477 aa).

Residues 125–131 (AAAPGSK), E149, D176, and D194 contribute to the S-adenosyl-L-methionine site. C247 acts as the Nucleophile in catalysis.

The protein belongs to the class I-like SAM-binding methyltransferase superfamily. RsmB/NOP family.

The protein localises to the cytoplasm. The enzyme catalyses cytidine(1407) in 16S rRNA + S-adenosyl-L-methionine = 5-methylcytidine(1407) in 16S rRNA + S-adenosyl-L-homocysteine + H(+). In terms of biological role, specifically methylates the cytosine at position 1407 (m5C1407) of 16S rRNA. The polypeptide is Ribosomal RNA small subunit methyltransferase F (Klebsiella pneumoniae (strain 342)).